The chain runs to 314 residues: Taste receptor type 2 member 42 (314 aa).

Over 1–7 (MPTELDK) the chain is Extracellular. A helical transmembrane segment spans residues 8–28 (IFLILAIVEFIIGLLGNVFIG). At 29 to 50 (LVNCSEGIKNQKVFSADFILTC) the chain is on the cytoplasmic side. A helical transmembrane segment spans residues 51–71 (LAISTIGQLLVILFDSFLVGL). Topologically, residues 72 to 101 (ASHLYTTYRLGKLVILLWHMTNHLTTWLAT) are extracellular. A helical transmembrane segment spans residues 102–122 (CLSIFYFFKIAHFPHSLFLWL). The Cytoplasmic portion of the chain corresponds to 123–127 (RWRMN). A helical transmembrane segment spans residues 128–148 (GMIVMLRTLSLFLLIFDSLVL). Residues 149 to 187 (KLFIDISLNIIDKSNLTLYFDESKTLYDKLSILKTLLSL) lie on the Extracellular side of the membrane. Asparagine 163 carries N-linked (GlcNAc...) asparagine glycosylation. A helical transmembrane segment spans residues 188–208 (TSFIPFSLSLTSLLFLFLSLV). Residues 209–238 (RHTRNLKLSSLGSRDSSTEAHRRAMKMVMS) are Cytoplasmic-facing. Residues 239 to 259 (FLFLFIVHFFSLQVANWIFFM) form a helical membrane-spanning segment. Residues 260 to 265 (SWNNKY) lie on the Extracellular side of the membrane. Residues 266–286 (IKFVMLALNAFPSCHSFILIL) traverse the membrane as a helical segment. Topologically, residues 287 to 314 (GNSKLRQTAVRLLSHLRNYTKTSNPLPL) are cytoplasmic.

This sequence belongs to the G-protein coupled receptor T2R family.

The protein resides in the membrane. In terms of biological role, receptor that may play a role in the perception of bitterness and is gustducin-linked. May play a role in sensing the chemical composition of the gastrointestinal content. The activity of this receptor may stimulate alpha gustducin, mediate PLC-beta-2 activation and lead to the gating of TRPM5. The chain is Taste receptor type 2 member 42 (TAS2R42) from Pongo pygmaeus (Bornean orangutan).